Consider the following 203-residue polypeptide: Superoxide dismutase [Mn/Fe] (203 aa).

Residues histidine 27, histidine 81, aspartate 163, and histidine 167 each contribute to the Fe(3+) site. Positions 27, 81, 163, and 167 each coordinate Mn(2+).

Belongs to the iron/manganese superoxide dismutase family. It depends on Mn(2+) as a cofactor. Requires Fe(3+) as cofactor.

It catalyses the reaction 2 superoxide + 2 H(+) = H2O2 + O2. Functionally, destroys superoxide anion radicals which are normally produced within the cells and which are toxic to biological systems. Catalyzes the dismutation of superoxide anion radicals into O2 and H2O2 by successive reduction and oxidation of the transition metal ion at the active site. The protein is Superoxide dismutase [Mn/Fe] (sodA) of Streptococcus mutans serotype c (strain ATCC 700610 / UA159).